The chain runs to 116 residues: Large ribosomal subunit protein bL17 (116 aa).

The protein belongs to the bacterial ribosomal protein bL17 family. In terms of assembly, part of the 50S ribosomal subunit. Contacts protein L32.

This is Large ribosomal subunit protein bL17 from Synechocystis sp. (strain ATCC 27184 / PCC 6803 / Kazusa).